A 115-amino-acid chain; its full sequence is Aspartate 1-decarboxylase (115 aa).

Residue Ser-24 is the Schiff-base intermediate with substrate; via pyruvic acid of the active site. Position 24 is a pyruvic acid (Ser) (Ser-24). Residue Thr-56 coordinates substrate. The active-site Proton donor is Tyr-57. A substrate-binding site is contributed by 72–74 (GAA).

This sequence belongs to the PanD family. As to quaternary structure, heterooctamer of four alpha and four beta subunits. The cofactor is pyruvate. Post-translationally, is synthesized initially as an inactive proenzyme, which is activated by self-cleavage at a specific serine bond to produce a beta-subunit with a hydroxyl group at its C-terminus and an alpha-subunit with a pyruvoyl group at its N-terminus.

Its subcellular location is the cytoplasm. The catalysed reaction is L-aspartate + H(+) = beta-alanine + CO2. Its pathway is cofactor biosynthesis; (R)-pantothenate biosynthesis; beta-alanine from L-aspartate: step 1/1. In terms of biological role, catalyzes the pyruvoyl-dependent decarboxylation of aspartate to produce beta-alanine. The sequence is that of Aspartate 1-decarboxylase from Pseudothermotoga lettingae (strain ATCC BAA-301 / DSM 14385 / NBRC 107922 / TMO) (Thermotoga lettingae).